Reading from the N-terminus, the 384-residue chain is Protein RecA (384 aa).

ATP is bound at residue 76-83 (GPESSGKT). The tract at residues 346–365 (QGSAEPEKAAKPEKVEKADK) is disordered. Over residues 350–365 (EPEKAAKPEKVEKADK) the composition is skewed to basic and acidic residues.

This sequence belongs to the RecA family.

Its subcellular location is the cytoplasm. Can catalyze the hydrolysis of ATP in the presence of single-stranded DNA, the ATP-dependent uptake of single-stranded DNA by duplex DNA, and the ATP-dependent hybridization of homologous single-stranded DNAs. It interacts with LexA causing its activation and leading to its autocatalytic cleavage. The protein is Protein RecA of Polaromonas naphthalenivorans (strain CJ2).